We begin with the raw amino-acid sequence, 315 residues long: DNA-directed RNA polymerase subunit alpha (315 aa).

Positions 1 to 228 are alpha N-terminal domain (alpha-NTD); sequence MLEIEKPKIE…EHFKLFMTLT (228 aa). Positions 245-315 are alpha C-terminal domain (alpha-CTD); the sequence is KEKVLEMAIE…LGLSLKQNED (71 aa).

This sequence belongs to the RNA polymerase alpha chain family. Homodimer. The RNAP catalytic core consists of 2 alpha, 1 beta, 1 beta' and 1 omega subunit. When a sigma factor is associated with the core the holoenzyme is formed, which can initiate transcription.

It carries out the reaction RNA(n) + a ribonucleoside 5'-triphosphate = RNA(n+1) + diphosphate. Functionally, DNA-dependent RNA polymerase catalyzes the transcription of DNA into RNA using the four ribonucleoside triphosphates as substrates. The protein is DNA-directed RNA polymerase subunit alpha of Clostridium kluyveri (strain NBRC 12016).